The following is a 170-amino-acid chain: Adenine phosphoribosyltransferase (170 aa).

The protein belongs to the purine/pyrimidine phosphoribosyltransferase family. As to quaternary structure, homodimer.

It is found in the cytoplasm. It catalyses the reaction AMP + diphosphate = 5-phospho-alpha-D-ribose 1-diphosphate + adenine. It participates in purine metabolism; AMP biosynthesis via salvage pathway; AMP from adenine: step 1/1. Functionally, catalyzes a salvage reaction resulting in the formation of AMP, that is energically less costly than de novo synthesis. The protein is Adenine phosphoribosyltransferase of Trichodesmium erythraeum (strain IMS101).